The sequence spans 1400 residues: DNA-directed RNA polymerase subunit beta' (1400 aa).

Residues Cys-71, Cys-73, Cys-86, and Cys-89 each contribute to the Zn(2+) site. Positions 462, 464, and 466 each coordinate Mg(2+). 4 residues coordinate Zn(2+): Cys-811, Cys-885, Cys-892, and Cys-895.

Belongs to the RNA polymerase beta' chain family. As to quaternary structure, the RNAP catalytic core consists of 2 alpha, 1 beta, 1 beta' and 1 omega subunit. When a sigma factor is associated with the core the holoenzyme is formed, which can initiate transcription. Requires Mg(2+) as cofactor. It depends on Zn(2+) as a cofactor.

It carries out the reaction RNA(n) + a ribonucleoside 5'-triphosphate = RNA(n+1) + diphosphate. Functionally, DNA-dependent RNA polymerase catalyzes the transcription of DNA into RNA using the four ribonucleoside triphosphates as substrates. The chain is DNA-directed RNA polymerase subunit beta' from Brucella ovis (strain ATCC 25840 / 63/290 / NCTC 10512).